We begin with the raw amino-acid sequence, 710 residues long: E3 ubiquitin-protein ligase TRIM9 (710 aa).

An RING-type zinc finger spans residues 10 to 50 (CPVCGSFYREPIILPCSHNICQACARNILVQTPESESPQSR). Thr-41 is subject to Phosphothreonine. Phosphoserine is present on residues Ser-44, Ser-46, Ser-49, and Ser-53. B box-type zinc fingers lie at residues 163–212 (AAAL…LVPP) and 224–266 (RKVS…VKAL). Cys-168, Cys-171, Cys-193, His-198, Cys-229, His-232, Cys-252, and His-258 together coordinate Zn(2+). The stretch at 273–340 (HKSQLSQALN…KAQLLARVNK (68 aa)) forms a coiled coil. The COS domain occupies 374–432 (IKENDPSGFLQISDALIRRVHLTEDQWGKGTLTPRMTTDFDLSLDNSPLLQSIHQLDFV). The Fibronectin type-III domain maps to 440–535 (VPATPILQLE…KTLVLQTSEV (96 aa)). Positions 533 to 702 (SEVAWFAFDP…LHTGLQVPDF (170 aa)) constitute a B30.2/SPRY domain.

It belongs to the TRIM/RBCC family. As to quaternary structure, interacts with SNAP25. Auto-ubiquitinated.

It localises to the cytoplasm. It is found in the cell projection. The protein localises to the dendrite. The protein resides in the cytoplasmic vesicle. Its subcellular location is the secretory vesicle. It localises to the synaptic vesicle. It is found in the synapse. The protein localises to the cytoskeleton. The enzyme catalyses S-ubiquitinyl-[E2 ubiquitin-conjugating enzyme]-L-cysteine + [acceptor protein]-L-lysine = [E2 ubiquitin-conjugating enzyme]-L-cysteine + N(6)-ubiquitinyl-[acceptor protein]-L-lysine.. Its pathway is protein modification; protein ubiquitination. Functionally, E3 ubiquitin-protein ligase which ubiquitinates itself in cooperation with an E2 enzyme UBE2D2/UBC4 and serves as a targeting signal for proteasomal degradation. May play a role in regulation of neuronal functions. May act as a regulator of synaptic vesicle exocytosis by controlling the availability of SNAP25 for the SNARE complex formation. In Bos taurus (Bovine), this protein is E3 ubiquitin-protein ligase TRIM9 (TRIM9).